Here is a 370-residue protein sequence, read N- to C-terminus: Putative alanine racemase 2 (370 aa).

K38 serves as the catalytic Proton acceptor; specific for D-alanine. N6-(pyridoxal phosphate)lysine is present on K38. Catalysis depends on Y266, which acts as the Proton acceptor; specific for L-alanine.

It belongs to the alanine racemase family. Pyridoxal 5'-phosphate serves as cofactor.

It catalyses the reaction L-alanine = D-alanine. The sequence is that of Putative alanine racemase 2 (alr2) from Schizosaccharomyces pombe (strain 972 / ATCC 24843) (Fission yeast).